The sequence spans 258 residues: Ribosomal RNA small subunit methyltransferase J (258 aa).

Residues 107–108 (RD), 123–124 (ER), 159–160 (SS), and D177 contribute to the S-adenosyl-L-methionine site.

Belongs to the methyltransferase superfamily. RsmJ family.

Its subcellular location is the cytoplasm. The catalysed reaction is guanosine(1516) in 16S rRNA + S-adenosyl-L-methionine = N(2)-methylguanosine(1516) in 16S rRNA + S-adenosyl-L-homocysteine + H(+). Its function is as follows. Specifically methylates the guanosine in position 1516 of 16S rRNA. The protein is Ribosomal RNA small subunit methyltransferase J of Shewanella sediminis (strain HAW-EB3).